Consider the following 86-residue polypeptide: Bradykinin-potentiating peptide 25.12 (86 aa).

Residues 1–22 (MNKRVLLVIFFVTLLIADEVNS) form the signal peptide. The disordered stretch occupies residues 67-86 (APAAAAAPEEPPVEQRRRRR).

It belongs to the non-disulfide-bridged peptide (NDBP) superfamily. Long chain multifunctional peptide (group 2) family. As to expression, expressed by the venom gland.

It localises to the secreted. Functionally, inhibits angiotensin-converting enzyme (ACE), but does not serve as substrate for the enzyme. Potentiates bradykinin (BK) on the isolated guinea pig ileum as well as the isolated rat uterus for contraction. Also potentiates in vivo the depressor effect of BK on arterial blood pressure in the normotensive anesthetized rat. The protein is Bradykinin-potentiating peptide 25.12 of Lychas mucronatus (Chinese swimming scorpion).